The primary structure comprises 522 residues: Pectinesterase/pectinesterase inhibitor PPE8B (522 aa).

Positions 1–30 (MPYLLMASHNPLPAGKQLLLLVLLCAFFSS) are cleaved as a signal peptide. The segment at 31-174 (SFIPFASCSI…TSLVQELLTQ (144 aa)) is pectinesterase inhibitor PPE8B. Residues Asn-105, Asn-118, Asn-119, Asn-218, Asn-221, and Asn-274 are each glycosylated (N-linked (GlcNAc...) asparagine). The segment at 208–506 (DAIVAQDGTG…YTVAQFIEGN (299 aa)) is pectinesterase PPE8B. Substrate contacts are provided by Thr-283 and Gln-313. Asp-336 acts as the Proton donor; for pectinesterase activity in catalysis. Cys-350 and Cys-370 are disulfide-bonded. The active-site Nucleophile; for pectinesterase activity is Asp-357. An N-linked (GlcNAc...) asparagine glycan is attached at Asn-405. Arg-426 and Trp-428 together coordinate substrate. N-linked (GlcNAc...) asparagine glycans are attached at residues Asn-489 and Asn-496.

In the N-terminal section; belongs to the PMEI family. The protein in the C-terminal section; belongs to the pectinesterase family.

Its subcellular location is the secreted. The protein resides in the cell wall. The enzyme catalyses [(1-&gt;4)-alpha-D-galacturonosyl methyl ester](n) + n H2O = [(1-&gt;4)-alpha-D-galacturonosyl](n) + n methanol + n H(+). Its pathway is glycan metabolism; pectin degradation; 2-dehydro-3-deoxy-D-gluconate from pectin: step 1/5. May have roles in the deposition of pectin in developing tissues and in the wall loosening and cell separation that occurs in cell expansion, fruit ripening and abscission. This is Pectinesterase/pectinesterase inhibitor PPE8B from Prunus persica (Peach).